Consider the following 377-residue polypeptide: Dihydroorotase, mitochondrial (377 aa).

Residues histidine 44, histidine 46, lysine 130, histidine 168, and histidine 206 each coordinate Zn(2+). An N6-carboxylysine modification is found at lysine 130. Serine 223 is subject to Phosphoserine. Aspartate 280 contributes to the Zn(2+) binding site.

It belongs to the metallo-dependent hydrolases superfamily. DHOase family. Class II DHOase subfamily. Zn(2+) serves as cofactor.

It localises to the mitochondrion. The enzyme catalyses (S)-dihydroorotate + H2O = N-carbamoyl-L-aspartate + H(+). Its pathway is pyrimidine metabolism; UMP biosynthesis via de novo pathway; (S)-dihydroorotate from bicarbonate: step 3/3. This chain is Dihydroorotase, mitochondrial (PYR4), found in Arabidopsis thaliana (Mouse-ear cress).